A 207-amino-acid chain; its full sequence is MRVGSRKLRRDEKGFTGLEAAIVLIAFVVVAAVFSYVMLGAGFYTTQKSKKVVDTGVKQASSSLTLDGQYIYLNCTSAANGQTGSSGKVGQVYFYVTQTAGGSPVDLNMTSIAITTDTGFKQLFFNDSCTPGTDCPWWYDDTVGDGDNVVEPNEKYKITIDVNNTEWSGIGELNPNDVVTIEVRPPIGAPLTITKTLPPSFTNLTFV.

Positions 1-14 are excised as a propeptide; it reads MRVGSRKLRRDEKG.

The protein belongs to the archaeal flagellin family.

Its subcellular location is the archaeal flagellum. Functionally, flagellin is the subunit protein which polymerizes to form the filaments of archaeal flagella. The polypeptide is Probable flagellin 2 (flaB2) (Archaeoglobus fulgidus (strain ATCC 49558 / DSM 4304 / JCM 9628 / NBRC 100126 / VC-16)).